The chain runs to 405 residues: Replication factor C large subunit (405 aa).

Residue 47-54 participates in ATP binding; that stretch reads GPPGVGKT.

It belongs to the activator 1 small subunits family. RfcL subfamily. In terms of assembly, heteromultimer composed of small subunits (RfcS) and large subunits (RfcL).

Part of the RFC clamp loader complex which loads the PCNA sliding clamp onto DNA. The polypeptide is Replication factor C large subunit (Saccharolobus islandicus (strain Y.N.15.51 / Yellowstone #2) (Sulfolobus islandicus)).